A 485-amino-acid polypeptide reads, in one-letter code: Inosine-5'-monophosphate dehydrogenase (485 aa).

2 consecutive CBS domains span residues 95 to 154 and 155 to 215; these read VITN…IDDV and MTKE…AKDS. NAD(+)-binding positions include aspartate 249 and 299-301; that span reads GIG. K(+) contacts are provided by glycine 301 and glycine 303. Serine 304 contributes to the IMP binding site. Cysteine 306 contributes to the K(+) binding site. Cysteine 306 functions as the Thioimidate intermediate in the catalytic mechanism. Residues 339–341, 362–363, and 386–390 each bind IMP; these read DGG, GS, and YRGMG. The active-site Proton acceptor is arginine 402. Glutamate 414 contributes to the IMP binding site. Positions 468, 469, and 470 each coordinate K(+).

It belongs to the IMPDH/GMPR family. In terms of assembly, homotetramer. Requires K(+) as cofactor.

It carries out the reaction IMP + NAD(+) + H2O = XMP + NADH + H(+). Its pathway is purine metabolism; XMP biosynthesis via de novo pathway; XMP from IMP: step 1/1. Mycophenolic acid (MPA) is a non-competitive inhibitor that prevents formation of the closed enzyme conformation by binding to the same site as the amobile flap. In contrast, mizoribine monophosphate (MZP) is a competitive inhibitor that induces the closed conformation. MPA is a potent inhibitor of mammalian IMPDHs but a poor inhibitor of the bacterial enzymes. MZP is a more potent inhibitor of bacterial IMPDH. Its function is as follows. Catalyzes the conversion of inosine 5'-phosphate (IMP) to xanthosine 5'-phosphate (XMP), the first committed and rate-limiting step in the de novo synthesis of guanine nucleotides, and therefore plays an important role in the regulation of cell growth. The chain is Inosine-5'-monophosphate dehydrogenase from Halalkalibacterium halodurans (strain ATCC BAA-125 / DSM 18197 / FERM 7344 / JCM 9153 / C-125) (Bacillus halodurans).